A 60-amino-acid chain; its full sequence is Putative mercuric resistance protein (60 aa).

The sequence is that of Putative mercuric resistance protein from Pseudomonas aeruginosa.